A 235-amino-acid polypeptide reads, in one-letter code: 7-cyano-7-deazaguanine synthase (235 aa).

16–26 is an ATP binding site; the sequence is FSGGQDSTTCL. Zn(2+)-binding residues include Cys195, Cys204, Cys207, and Cys210.

The protein belongs to the QueC family. It depends on Zn(2+) as a cofactor.

The catalysed reaction is 7-carboxy-7-deazaguanine + NH4(+) + ATP = 7-cyano-7-deazaguanine + ADP + phosphate + H2O + H(+). Its pathway is purine metabolism; 7-cyano-7-deazaguanine biosynthesis. Functionally, catalyzes the ATP-dependent conversion of 7-carboxy-7-deazaguanine (CDG) to 7-cyano-7-deazaguanine (preQ(0)). The chain is 7-cyano-7-deazaguanine synthase from Shewanella frigidimarina (strain NCIMB 400).